A 208-amino-acid polypeptide reads, in one-letter code: Platelet glycoprotein Ib beta chain (208 aa).

Positions 1–26 are cleaved as a signal peptide; sequence MGSGPRGAVSLLLLMLAPPSCPAADC. Cystine bridges form between cysteine 26/cysteine 32 and cysteine 30/cysteine 39. An LRRNT domain is found at 27 to 55; sequence PAPCSCAGTLVDCGRRGLTWASLPTSFPV. Topologically, residues 27-147 are extracellular; it reads PAPCSCAGTL…RAACAPGPLC (121 aa). Residues 60-83 form an LRR repeat; that stretch reads LVLTGNNLTALPSGLLDALPAVRT. An N-linked (GlcNAc...) asparagine glycan is attached at asparagine 66. Residues 89 to 143 enclose the LRRCT domain; that stretch reads NPWRCDCRLVPLRAWLAGRPERAPYRDLRCVAPPAVRGRLLPYLAEDDVRAACAP. Cystine bridges form between cysteine 93/cysteine 118 and cysteine 95/cysteine 141. The chain crosses the membrane as a helical span at residues 148 to 172; the sequence is WGALAAELALLGLGLLHALLLVLLL. Over 173-208 the chain is Cytoplasmic; it reads CRLRRLRARARARARAALRLSLTDPLVAEQDGTDES. Residue serine 193 is modified to Phosphoserine; by PKA. Threonine 195 bears the Phosphothreonine mark.

In terms of assembly, two GP-Ib beta are disulfide-linked to one GP-Ib alpha. GP-IX is complexed with the GP-Ib heterodimer via a non covalent linkage. Interacts with TRAF4.

The protein resides in the membrane. Gp-Ib, a surface membrane protein of platelets, participates in the formation of platelet plugs by binding to von Willebrand factor, which is already bound to the subendothelium. This Papio cynocephalus (Yellow baboon) protein is Platelet glycoprotein Ib beta chain (GP1BB).